The chain runs to 289 residues: 4-hydroxy-3-methylbut-2-enyl diphosphate reductase (289 aa).

Cysteine 12 is a binding site for [4Fe-4S] cluster. Positions 44 and 81 each coordinate (2E)-4-hydroxy-3-methylbut-2-enyl diphosphate. 2 residues coordinate dimethylallyl diphosphate: histidine 44 and histidine 81. The isopentenyl diphosphate site is built by histidine 44 and histidine 81. Cysteine 103 serves as a coordination point for [4Fe-4S] cluster. Residue histidine 130 coordinates (2E)-4-hydroxy-3-methylbut-2-enyl diphosphate. Dimethylallyl diphosphate is bound at residue histidine 130. Residue histidine 130 coordinates isopentenyl diphosphate. Residue glutamate 132 is the Proton donor of the active site. Position 174 (threonine 174) interacts with (2E)-4-hydroxy-3-methylbut-2-enyl diphosphate. Cysteine 202 contributes to the [4Fe-4S] cluster binding site. Residues serine 230, asparagine 232, and serine 273 each contribute to the (2E)-4-hydroxy-3-methylbut-2-enyl diphosphate site. Residues serine 230, asparagine 232, and serine 273 each coordinate dimethylallyl diphosphate. Positions 230, 232, and 273 each coordinate isopentenyl diphosphate.

The protein belongs to the IspH family. The cofactor is [4Fe-4S] cluster.

It catalyses the reaction isopentenyl diphosphate + 2 oxidized [2Fe-2S]-[ferredoxin] + H2O = (2E)-4-hydroxy-3-methylbut-2-enyl diphosphate + 2 reduced [2Fe-2S]-[ferredoxin] + 2 H(+). The catalysed reaction is dimethylallyl diphosphate + 2 oxidized [2Fe-2S]-[ferredoxin] + H2O = (2E)-4-hydroxy-3-methylbut-2-enyl diphosphate + 2 reduced [2Fe-2S]-[ferredoxin] + 2 H(+). Its pathway is isoprenoid biosynthesis; dimethylallyl diphosphate biosynthesis; dimethylallyl diphosphate from (2E)-4-hydroxy-3-methylbutenyl diphosphate: step 1/1. It participates in isoprenoid biosynthesis; isopentenyl diphosphate biosynthesis via DXP pathway; isopentenyl diphosphate from 1-deoxy-D-xylulose 5-phosphate: step 6/6. In terms of biological role, catalyzes the conversion of 1-hydroxy-2-methyl-2-(E)-butenyl 4-diphosphate (HMBPP) into a mixture of isopentenyl diphosphate (IPP) and dimethylallyl diphosphate (DMAPP). Acts in the terminal step of the DOXP/MEP pathway for isoprenoid precursor biosynthesis. This chain is 4-hydroxy-3-methylbut-2-enyl diphosphate reductase, found in Treponema denticola (strain ATCC 35405 / DSM 14222 / CIP 103919 / JCM 8153 / KCTC 15104).